The primary structure comprises 133 residues: Small ribosomal subunit protein uS8 (133 aa).

The protein belongs to the universal ribosomal protein uS8 family. As to quaternary structure, part of the 30S ribosomal subunit.

One of the primary rRNA binding proteins, it binds directly to 16S rRNA central domain where it helps coordinate assembly of the platform of the 30S subunit. The chain is Small ribosomal subunit protein uS8 from Saccharolobus islandicus (strain L.S.2.15 / Lassen #1) (Sulfolobus islandicus).